A 254-amino-acid polypeptide reads, in one-letter code: Ribonuclease HII (254 aa).

An RNase H type-2 domain is found at 67-254 (IVIAGVDEVG…HRMSFLKNII (188 aa)). Residues D73, E74, and D170 each contribute to the a divalent metal cation site.

The protein belongs to the RNase HII family. Mn(2+) is required as a cofactor. It depends on Mg(2+) as a cofactor.

The protein resides in the cytoplasm. The catalysed reaction is Endonucleolytic cleavage to 5'-phosphomonoester.. In terms of biological role, endonuclease that specifically degrades the RNA of RNA-DNA hybrids. The polypeptide is Ribonuclease HII (Clostridium acetobutylicum (strain ATCC 824 / DSM 792 / JCM 1419 / IAM 19013 / LMG 5710 / NBRC 13948 / NRRL B-527 / VKM B-1787 / 2291 / W)).